The following is an 890-amino-acid chain: uncharacterized protein (890 aa).

Residues 1–20 (MKILKSLVLLVLFMAMPAKA) form the signal peptide. 6 helical membrane passes run 518 to 538 (AALT…ALKL), 567 to 587 (TYFF…VVGA), 613 to 633 (LLFI…IITI), 651 to 671 (VIAF…IILM), 684 to 704 (ISTL…FLLI), and 775 to 795 (FLVL…SYGL). A disordered region spans residues 860-890 (KARKPEGGEHTNKFLAERNDVPKKEEGERKE). The span at 862–890 (RKPEGGEHTNKFLAERNDVPKKEEGERKE) shows a compositional bias: basic and acidic residues.

It belongs to the TrbL/VirB6 family.

The protein resides in the cell membrane. This is an uncharacterized protein from Rickettsia felis (strain ATCC VR-1525 / URRWXCal2) (Rickettsia azadi).